We begin with the raw amino-acid sequence, 137 residues long: Probable 4-amino-4-deoxy-L-arabinose-phosphoundecaprenol flippase subunit ArnF (137 aa).

Residues 1–5 (MSRAR) lie on the Cytoplasmic side of the membrane. Residues 6-26 (GFAFALGSVALVSGAQLGMRW) traverse the membrane as a helical segment. Residues 27 to 49 (SMTRLPAPDQWLPALSAGSVDLA) lie on the Periplasmic side of the membrane. The chain crosses the membrane as a helical span at residues 50–70 (ALAVVAAAIAAYALSMLCWLL). The Cytoplasmic segment spans residues 71 to 80 (ALRDLPLGRA). Residues 81 to 101 (YSLLSISYALVYLLAASLPLF) traverse the membrane as a helical segment. Asparagine 102 is a topological domain (periplasmic). A helical membrane pass occupies residues 103-123 (EPFTLSKTLGVALVILGVITI). The Cytoplasmic segment spans residues 124–137 (NSRSAPATSPRNTP).

Belongs to the ArnF family. In terms of assembly, heterodimer of ArnE and ArnF.

The protein resides in the cell inner membrane. Its pathway is bacterial outer membrane biogenesis; lipopolysaccharide biosynthesis. In terms of biological role, translocates 4-amino-4-deoxy-L-arabinose-phosphoundecaprenol (alpha-L-Ara4N-phosphoundecaprenol) from the cytoplasmic to the periplasmic side of the inner membrane. The protein is Probable 4-amino-4-deoxy-L-arabinose-phosphoundecaprenol flippase subunit ArnF of Pseudomonas fluorescens (strain ATCC BAA-477 / NRRL B-23932 / Pf-5).